Reading from the N-terminus, the 181-residue chain is Probable cobalt-precorrin-6B C(15)-methyltransferase (decarboxylating) (181 aa).

S-adenosyl-L-methionine-binding positions include threonine 16, 40–44, aspartate 61, and alanine 89; that span reads GCGSG.

This sequence belongs to the methyltransferase superfamily. Archaeal-type CbiT family.

It catalyses the reaction Co-precorrin-6B + S-adenosyl-L-methionine = Co-precorrin-7 + S-adenosyl-L-homocysteine + CO2. It participates in cofactor biosynthesis; adenosylcobalamin biosynthesis; cob(II)yrinate a,c-diamide from sirohydrochlorin (anaerobic route): step 8/10. Its function is as follows. Catalyzes the methylation of C-15 in cobalt-precorrin-6B followed by the decarboxylation of C-12 to form cobalt-precorrin-7. The chain is Probable cobalt-precorrin-6B C(15)-methyltransferase (decarboxylating) from Methanococcus maripaludis (strain DSM 14266 / JCM 13030 / NBRC 101832 / S2 / LL).